Reading from the N-terminus, the 129-residue chain is Small ribosomal subunit protein uS11 (129 aa).

The protein belongs to the universal ribosomal protein uS11 family. Part of the 30S ribosomal subunit. Interacts with proteins S7 and S18. Binds to IF-3.

Functionally, located on the platform of the 30S subunit, it bridges several disparate RNA helices of the 16S rRNA. Forms part of the Shine-Dalgarno cleft in the 70S ribosome. This Idiomarina loihiensis (strain ATCC BAA-735 / DSM 15497 / L2-TR) protein is Small ribosomal subunit protein uS11.